Consider the following 483-residue polypeptide: Protein FIZZY-RELATED 2 (483 aa).

The interval 1 to 28 (MEEEDPTASNVITNSNSSSMRNLSPAMN) is disordered. Polar residues predominate over residues 7-28 (TASNVITNSNSSSMRNLSPAMN). 7 WD repeats span residues 174-211 (QDDFYLNLVDWSAQNVLAVGLGNCVYLWNACSSKVTKL), 215-254 (GAEDSVCSVGWALRGTHLAVGTSTGKVQIWDASRCKRTRT), 257-294 (GHRLRVGALAWGSSVLSSGSRDKSILQRDIRCQEDHVS), 298-337 (GHKSEVCGLKWSYDNRELASGGNDNRLFVWNQHSTQPVLK), 340-382 (EHTA…HLSS), 384-425 (DTCS…KIAT), and 428-467 (GHTYRVLYLAVSPDGQTIVTGAGDETLRFWNVFPSPKSQN).

Belongs to the WD repeat CDC20/Fizzy family. Associates with the APC/C complex. Interacts with CDC20-1, CDC20-2, CYCA1-1, CYCA1-2, CYCA3-4, CYCB1-1 and CYCB1-2. Binds to GIG1 and PYM. In terms of tissue distribution, expressed in seedlings, flowers, leaves and roots. Expressed in the differentiating cell files of the root elongation zone.

It localises to the nucleus. Its pathway is protein modification; protein ubiquitination. Activator protein that regulates the ubiquitin ligase activity and substrate specificity of the anaphase promoting complex/cyclosome (APC/C). Necessary and sufficient for endoreduplication and correct cell expansion. Controls meristem size by stimulating endoreduplication in the elongation zone. The protein is Protein FIZZY-RELATED 2 (FZR2) of Arabidopsis thaliana (Mouse-ear cress).